Consider the following 628-residue polypeptide: Serine/threonine-protein kinase Nek11 (628 aa).

The Protein kinase domain maps to 30–288; that stretch reads YVLQQKLGSG…AADILKAPYM (259 aa). ATP-binding positions include 36–44 and K62; that span reads LGSGSFGTV. Catalysis depends on D159, which acts as the Proton acceptor. Phosphoserine; by CHEK1 is present on S274. Positions 347 to 385 form a coiled coil; the sequence is WLRKLQAADERARRLKKIAEENYKENDKRMQALRSRNVG. Residues 452–463 are compositionally biased toward acidic residues; it reads SEDSEEQEEEMI. Residues 452–475 form a disordered region; the sequence is SEDSEEQEEEMIFSEAGGDTKEEE.

It belongs to the protein kinase superfamily. NEK Ser/Thr protein kinase family. NIMA subfamily. In terms of assembly, interacts with NEK2. Mn(2+) is required as a cofactor. Mg(2+) serves as cofactor. In terms of processing, phosphorylated by NEK2. Phosphorylation at Ser-274 is important for its activation.

Its subcellular location is the nucleus. The protein localises to the nucleolus. It carries out the reaction L-seryl-[protein] + ATP = O-phospho-L-seryl-[protein] + ADP + H(+). The enzyme catalyses L-threonyl-[protein] + ATP = O-phospho-L-threonyl-[protein] + ADP + H(+). With respect to regulation, autorepressed by intramolecular binding of the C-terminus which dissociates following phosphorylation by NEK2. Activated in response to DNA damage. Inhibited by zinc. Its function is as follows. Protein kinase which plays an important role in the G2/M checkpoint response to DNA damage. Controls degradation of CDC25A by directly phosphorylating it on residues whose phosphorylation is required for BTRC-mediated polyubiquitination and degradation. This Mus musculus (Mouse) protein is Serine/threonine-protein kinase Nek11.